Consider the following 527-residue polypeptide: Probable bifunctional tRNA threonylcarbamoyladenosine biosynthesis protein (527 aa).

Positions 1–324 (MIVLGLEGTA…YRIDEVDAPW (324 aa)) are kae1. Residues histidine 107, histidine 111, and tyrosine 128 each contribute to the Fe cation site. Residues 128–132 (YVSGG), aspartate 160, glycine 173, glutamate 177, and asparagine 257 contribute to the L-threonylcarbamoyladenylate site. Aspartate 285 lines the Fe cation pocket. The Protein kinase domain maps to 330 to 527 (VKYRDAGAES…EDIRRRHRYV (198 aa)). ATP-binding positions include 333–341 (RDAGAESRI) and lysine 354. Residue aspartate 445 is the Proton acceptor; for kinase activity of the active site.

In the N-terminal section; belongs to the KAE1 / TsaD family. This sequence in the C-terminal section; belongs to the protein kinase superfamily. Tyr protein kinase family. BUD32 subfamily. As to quaternary structure, component of the KEOPS complex that consists of Kae1, Bud32, Cgi121 and Pcc1; the whole complex dimerizes. Fe(2+) serves as cofactor.

Its subcellular location is the cytoplasm. The enzyme catalyses L-seryl-[protein] + ATP = O-phospho-L-seryl-[protein] + ADP + H(+). It catalyses the reaction L-threonyl-[protein] + ATP = O-phospho-L-threonyl-[protein] + ADP + H(+). The catalysed reaction is L-threonylcarbamoyladenylate + adenosine(37) in tRNA = N(6)-L-threonylcarbamoyladenosine(37) in tRNA + AMP + H(+). Its function is as follows. Required for the formation of a threonylcarbamoyl group on adenosine at position 37 (t(6)A37) in tRNAs that read codons beginning with adenine. Is a component of the KEOPS complex that is probably involved in the transfer of the threonylcarbamoyl moiety of threonylcarbamoyl-AMP (TC-AMP) to the N6 group of A37. The Kae1 domain likely plays a direct catalytic role in this reaction. The Bud32 domain probably displays kinase activity that regulates Kae1 function. The protein is Probable bifunctional tRNA threonylcarbamoyladenosine biosynthesis protein of Thermoplasma volcanium (strain ATCC 51530 / DSM 4299 / JCM 9571 / NBRC 15438 / GSS1).